The following is an 81-amino-acid chain: Serine rich endogenous peptide 21 (81 aa).

Positions 1 to 40 are cleaved as a signal peptide; it reads MLELHFEFIDLNQPKMYKFVVCLLTLSFLLLSGLSNTALA. The SCOOP motif motif lies at 65-79; that stretch reads KVRVLPSASRRGPGQ. The short motif at 71 to 73 is the SxS motif essential for MIK2 binding element; sequence SAS.

This sequence belongs to the serine rich endogenous peptide (SCOOP) phytocytokine family. In terms of assembly, interacts with MIK2 (via extracellular leucine-rich repeat domain); this interaction triggers the formation of complex between MIK2 and the BAK1/SERK3 and SERK4 coreceptors, and subsequent BAK1 activation by phosphorylation.

The protein resides in the cell membrane. Its subcellular location is the secreted. It is found in the extracellular space. The protein localises to the apoplast. Brassicaceae-specific phytocytokine (plant endogenous peptide released into the apoplast) perceived by MIK2 in a BAK1/SERK3 and SERK4 coreceptors-dependent manner, that modulates various physiological and antimicrobial processes including growth prevention and reactive oxygen species (ROS) response regulation. The protein is Serine rich endogenous peptide 21 of Arabidopsis thaliana (Mouse-ear cress).